The following is a 457-amino-acid chain: tRNA-2-methylthio-N(6)-dimethylallyladenosine synthase (457 aa).

The MTTase N-terminal domain occupies 3–120 (KKVYVKTFGC…LPQMIDARRE (118 aa)). [4Fe-4S] cluster contacts are provided by cysteine 12, cysteine 49, cysteine 83, cysteine 157, cysteine 161, and cysteine 164. The region spanning 143-377 (RVEGPSAFVS…QATIEENVAR (235 aa)) is the Radical SAM core domain. One can recognise a TRAM domain in the interval 380–447 (QSMLGKVERI…PHSLRGELVL (68 aa)).

This sequence belongs to the methylthiotransferase family. MiaB subfamily. Monomer. It depends on [4Fe-4S] cluster as a cofactor.

It localises to the cytoplasm. It catalyses the reaction N(6)-dimethylallyladenosine(37) in tRNA + (sulfur carrier)-SH + AH2 + 2 S-adenosyl-L-methionine = 2-methylsulfanyl-N(6)-dimethylallyladenosine(37) in tRNA + (sulfur carrier)-H + 5'-deoxyadenosine + L-methionine + A + S-adenosyl-L-homocysteine + 2 H(+). Its function is as follows. Catalyzes the methylthiolation of N6-(dimethylallyl)adenosine (i(6)A), leading to the formation of 2-methylthio-N6-(dimethylallyl)adenosine (ms(2)i(6)A) at position 37 in tRNAs that read codons beginning with uridine. In Burkholderia pseudomallei (strain 1710b), this protein is tRNA-2-methylthio-N(6)-dimethylallyladenosine synthase.